Here is a 120-residue protein sequence, read N- to C-terminus: Glycophorin-A (120 aa).

Pyrrolidone carboxylic acid is present on glutamine 1. The tract at residues 1–40 (QTIATGSPPIAGTSDLSTITSAATPTFTTEQDGREQGDGL) is disordered. Residues threonine 2 and threonine 5 are each glycosylated (O-linked (GalNAc...) threonine). An O-linked (GalNAc...) serine glycan is attached at serine 7. O-linked (GalNAc...) threonine glycosylation is present at threonine 13. An O-linked (GalNAc...) serine glycan is attached at serine 17. Residues 17-29 (STITSAATPTFTT) show a composition bias toward low complexity. O-linked (GalNAc...) threonine glycans are attached at residues threonine 18 and threonine 20. Serine 21 carries an O-linked (GalNAc...) serine glycan. Residues threonine 24 and threonine 28 are each glycosylated (O-linked (GalNAc...) threonine). Residues 50 to 72 (VITVIILGVMAGIIGIILLLAYV) form a helical membrane-spanning segment. Residues 78 to 120 (KRPPADVPPPASTVPSADAPPPVSEDDETSLTSVETDYPGDSQ) are disordered. Residues 82-100 (ADVPPPASTVPSADAPPPV) show a composition bias toward pro residues. Positions 107-120 (SLTSVETDYPGDSQ) are enriched in polar residues. Phosphoserine is present on serine 119.

Belongs to the glycophorin-A family. As to quaternary structure, homodimer.

It localises to the membrane. Glycophorin A is the major intrinsic membrane sialoglycoprotein of the erythrocyte. Appears to be important for the function of SLC4A1 and is required for high activity of SLC4A1. May be involved in translocation of SLC4A1 to the plasma membrane. This chain is Glycophorin-A, found in Equus caballus (Horse).